A 166-amino-acid chain; its full sequence is Myosin regulatory light chain 2, ventricular/cardiac muscle isoform (166 aa).

Ala2 is subject to N,N,N-trimethylalanine. The residue at position 14 (Asn14) is a Deamidated asparagine. The residue at position 15 (Ser15) is a Phosphoserine; by ZIPK/DAPK3. Ser19 is subject to Phosphoserine. EF-hand domains lie at 24–59 (TQIQ…LGRV), 94–129 (DPEE…QAER), and 130–165 (FSKE…GEEK). Ca(2+)-binding residues include Asp37, Asn39, Asp41, and Asp48. A Phosphothreonine modification is found at Thr52.

Myosin is a hexamer of 2 heavy chains and 4 light chains. Interacts with MYOC. N-terminus is methylated by METTL11A/NTM1. In terms of processing, phosphorylated by MYLK3 and MYLK2; promotes cardiac muscle contraction and function. Dephosphorylated by PPP1CB complexed to PPP1R12B. The phosphorylated form in adult is expressed as gradients across the heart from endocardium (low phosphorylation) to epicardium (high phosphorylation); regulates cardiac torsion and workload distribution. As to expression, highly expressed in type I muscle fibers.

Its subcellular location is the cytoplasm. It localises to the myofibril. The protein localises to the sarcomere. It is found in the a band. Contractile protein that plays a role in heart development and function. Following phosphorylation, plays a role in cross-bridge cycling kinetics and cardiac muscle contraction by increasing myosin lever arm stiffness and promoting myosin head diffusion; as a consequence of the increase in maximum contraction force and calcium sensitivity of contraction force. These events altogether slow down myosin kinetics and prolong duty cycle resulting in accumulated myosins being cooperatively recruited to actin binding sites to sustain thin filament activation as a means to fine-tune myofilament calcium sensitivity to force. During cardiogenesis plays an early role in cardiac contractility by promoting cardiac myofibril assembly. This Homo sapiens (Human) protein is Myosin regulatory light chain 2, ventricular/cardiac muscle isoform.